Here is a 345-residue protein sequence, read N- to C-terminus: Putative [LysW]-L-2-aminoadipate/[LysW]-L-glutamate phosphate reductase (345 aa).

11 to 14 contributes to the NADP(+) binding site; sequence SGFT. The disordered stretch occupies residues 34-56; sequence TSRSKENKTIGHSHPNLRHSDLR. C146 is a catalytic residue. N309 lines the NADP(+) pocket.

This sequence belongs to the NAGSA dehydrogenase family. Type 1 subfamily. LysY sub-subfamily.

It localises to the cytoplasm. The enzyme catalyses [amino-group carrier protein]-C-terminal-N-(1-carboxy-5-oxopentan-1-yl)-L-glutamine + phosphate + NADP(+) = [amino-group carrier protein]-C-terminal-N-(1-carboxy-5-phosphooxy-5-oxopentan-1-yl)-L-glutamine + NADPH + H(+). The catalysed reaction is [amino-group carrier protein]-C-terminal-gamma-(L-glutamyl-5-semialdehyde)-L-glutamate + phosphate + NADP(+) = [amino-group carrier protein]-C-terminal-gamma-(5-phospho-L-glutamyl)-L-glutamate + NADPH + H(+). The protein operates within amino-acid biosynthesis; L-lysine biosynthesis via AAA pathway; L-lysine from L-alpha-aminoadipate (Thermus route): step 3/5. It functions in the pathway amino-acid biosynthesis; L-arginine biosynthesis. In terms of biological role, involved in both the arginine and lysine biosynthetic pathways. This is Putative [LysW]-L-2-aminoadipate/[LysW]-L-glutamate phosphate reductase from Haloarcula marismortui (strain ATCC 43049 / DSM 3752 / JCM 8966 / VKM B-1809) (Halobacterium marismortui).